Consider the following 294-residue polypeptide: Putative inactive magnesium transporter MRS2-8 (294 aa).

Residues 179 to 216 adopt a coiled-coil conformation; the sequence is KLKSSMTRLTAQVQKIKDELEQLLEDDEDMAELYLSRK.

Belongs to the CorA metal ion transporter (MIT) (TC 1.A.35.5) family.

The sequence is that of Putative inactive magnesium transporter MRS2-8 (MRS2-8) from Arabidopsis thaliana (Mouse-ear cress).